The chain runs to 438 residues: MSENKAHITVNNKKIELSVRKGTLGPGVIEIASLYKETDTFTYDPGFTSTASCESKITYIDGDKGILLYCGYPIDQLAEKGDFLESCYLLLYGELPTKQEKIDFDRCIMQHMMVHEQFTRFFHGFRRDSHPMAVMVACLGAMSAFYHDSIDIKDAQQRMIAAIRLISKVPTLAAMAYKYSIGQAFVYPRNDLSYAANFLHMCFSVPCEEYKINPVLSRAMDRIFTLHADHEQNASTSTVRLVGSSGANPFACIAAGVACLWGPAHGGANEACLKMLQKIGSVERIPEFIARAKDKNDPFRLMGFGHRVYKNYDPRAKIMQQTCHEVLKELNIQDDPLLDIAIALENTALNDEYFIEKKLYPNVDFYSGITLKALGFPTEMFTVLFALARSIGWVAQWKEMIEDPAQKIGRPRQLYTGYAAREYVSIDKRISKNKMTTQ.

Catalysis depends on residues H306 and D364.

The protein belongs to the citrate synthase family.

The enzyme catalyses oxaloacetate + acetyl-CoA + H2O = citrate + CoA + H(+). It participates in carbohydrate metabolism; tricarboxylic acid cycle; isocitrate from oxaloacetate: step 1/2. This Bartonella quintana (strain Toulouse) (Rochalimaea quintana) protein is Citrate synthase (gltA).